Reading from the N-terminus, the 156-residue chain is Aspartate carbamoyltransferase regulatory chain (156 aa).

Zn(2+) is bound by residues C109, C114, C140, and C143.

This sequence belongs to the PyrI family. In terms of assembly, contains catalytic and regulatory chains. Zn(2+) is required as a cofactor.

Its function is as follows. Involved in allosteric regulation of aspartate carbamoyltransferase. In Methanosarcina barkeri (strain Fusaro / DSM 804), this protein is Aspartate carbamoyltransferase regulatory chain.